Here is an 83-residue protein sequence, read N- to C-terminus: uncharacterized protein (83 aa).

The N-terminal stretch at 1–20 (MRRALTLAVLATCAVLPALA) is a signal peptide.

It to P.denitrificans and M.extorquens MoxJ.

This is an uncharacterized protein from Paracoccus denitrificans.